Here is a 195-residue protein sequence, read N- to C-terminus: Holliday junction branch migration complex subunit RuvA (195 aa).

Residues M1 to K64 are domain I. Residues D65–V137 form a domain II region. A flexible linker region spans residues V137 to K141. The interval E142 to R195 is domain III.

The protein belongs to the RuvA family. As to quaternary structure, homotetramer. Forms an RuvA(8)-RuvB(12)-Holliday junction (HJ) complex. HJ DNA is sandwiched between 2 RuvA tetramers; dsDNA enters through RuvA and exits via RuvB. An RuvB hexamer assembles on each DNA strand where it exits the tetramer. Each RuvB hexamer is contacted by two RuvA subunits (via domain III) on 2 adjacent RuvB subunits; this complex drives branch migration. In the full resolvosome a probable DNA-RuvA(4)-RuvB(12)-RuvC(2) complex forms which resolves the HJ.

It is found in the cytoplasm. The RuvA-RuvB-RuvC complex processes Holliday junction (HJ) DNA during genetic recombination and DNA repair, while the RuvA-RuvB complex plays an important role in the rescue of blocked DNA replication forks via replication fork reversal (RFR). RuvA specifically binds to HJ cruciform DNA, conferring on it an open structure. The RuvB hexamer acts as an ATP-dependent pump, pulling dsDNA into and through the RuvAB complex. HJ branch migration allows RuvC to scan DNA until it finds its consensus sequence, where it cleaves and resolves the cruciform DNA. In Kosmotoga olearia (strain ATCC BAA-1733 / DSM 21960 / TBF 19.5.1), this protein is Holliday junction branch migration complex subunit RuvA.